A 649-amino-acid chain; its full sequence is Quinol oxidase subunit 1 (649 aa).

Over 1–13 (MKFKWDEFFVTGD) the chain is Extracellular. The chain crosses the membrane as a helical span at residues 14 to 34 (PLILGAQVSIALSTIAIIFVL). Residues 35–55 (TYFKKWKWLWSEWITTVDHKK) are Cytoplasmic-facing. The chain crosses the membrane as a helical span at residues 56–76 (LGIMYIISAVIMLFRGGVDGL). Topologically, residues 77–104 (MMRAQLALPNNSFLDSNHYNEIFTTHGT) are extracellular. A Fe(II)-heme a-binding site is contributed by His102. A helical membrane pass occupies residues 105–125 (IMIIFMAMPFLIGLINVVVPL). Residues 126-139 (QIGARDVAFPYLNN) are Cytoplasmic-facing. The chain crosses the membrane as a helical span at residues 140-160 (LSFWTFFVGAMLFNISFVIGG). Residues 161–187 (SPNAGWTSYMPLASNDMSPGPGENYYL) are Extracellular-facing. Residues 188–208 (LGLQIAGIGTLMTGINFMVTI) traverse the membrane as a helical segment. The Cytoplasmic portion of the chain corresponds to 209–228 (LKMRTKGMTLMRMPMFTWTT). A helical transmembrane segment spans residues 229 to 249 (LITMVIIVFAFPVLTVALALL). At 250–273 (SFDRLFGAHFFTLEAGGMPMLWAN) the chain is on the extracellular side. A helical transmembrane segment spans residues 274 to 294 (LFWIWGHPEVYIVILPAFGIF). 2 residues coordinate Cu cation: His280 and Tyr284. A cross-link (1'-histidyl-3'-tyrosine (His-Tyr)) is located at residues 280–284 (HPEVY). The Cytoplasmic segment spans residues 295–305 (SEIISSFARKQ). The helical transmembrane segment at 306–326 (LFGYTAMVGSIIAISVLSFLV) threads the bilayer. Topologically, residues 327–342 (WTHHFFTMGNSASVNS) are extracellular. Residues His329 and His330 each coordinate Cu cation. A helical membrane pass occupies residues 343–363 (FFSITTMAISIPTGVKIFNWL). Topologically, residues 364–376 (FTMYKGRISFTTP) are cytoplasmic. The helical transmembrane segment at 377 to 397 (MLWALAFIPNFVIGGVTGVML) threads the bilayer. Residues 398–415 (AMAAADYQYHNTYFLVSH) lie on the Extracellular side of the membrane. Residue His415 coordinates heme a3. A helical membrane pass occupies residues 416–436 (FHYVLIAGTVFACFAGFIFWY). Residue His417 coordinates Fe(II)-heme a. The Cytoplasmic portion of the chain corresponds to 437-451 (PKMFGHKLNERIGKW). The helical transmembrane segment at 452–472 (FFWIFMIGFNICFFPQYFLGL) threads the bilayer. Residues 473–492 (QGMPRRIYTYGPNDGWTTLN) are Extracellular-facing. Residues 493 to 513 (FISTVGAFMMGVGFLILCYNI) traverse the membrane as a helical segment. The Cytoplasmic portion of the chain corresponds to 514–585 (YYSFRYSTRE…KFKKIHMPSN (72 aa)). The helical transmembrane segment at 586 to 603 (SGRPFFMSVAFGIAGFGL) threads the bilayer. Topologically, residues 604-606 (VFE) are extracellular. Residues 607-624 (WYWMGVVGLIGVLLCMVL) form a helical membrane-spanning segment. Residues 625 to 649 (RSFEYDNGYYISVDEIKETERKISE) are Cytoplasmic-facing.

The protein belongs to the heme-copper respiratory oxidase family. Cu cation serves as cofactor. It depends on ferriheme a as a cofactor. The cofactor is Heme A3..

The protein resides in the cell membrane. It catalyses the reaction 2 a quinol + O2 = 2 a quinone + 2 H2O. The protein operates within energy metabolism; oxidative phosphorylation. Catalyzes quinol oxidation with the concomitant reduction of oxygen to water. Major component for energy conversion during vegetative growth. This chain is Quinol oxidase subunit 1 (qoxB), found in Bacillus spizizenii (strain ATCC 23059 / NRRL B-14472 / W23) (Bacillus subtilis subsp. spizizenii).